A 231-amino-acid chain; its full sequence is Nucleoside diphosphate kinase II, chloroplastic (231 aa).

The N-terminal 62 residues, 1–62, are a transit peptide targeting the chloroplast; it reads MVGATVVSKW…RNSASRRRLR (62 aa). The ATP site is built by K91, F139, R167, T173, R184, and N194. The Pros-phosphohistidine intermediate role is filled by H197.

The protein belongs to the NDK family. As to quaternary structure, interacts with PHYA, MPK3 and MPK6. Requires Mg(2+) as cofactor. Autophosphorylated.

The protein localises to the plastid. The protein resides in the chloroplast. It catalyses the reaction a 2'-deoxyribonucleoside 5'-diphosphate + ATP = a 2'-deoxyribonucleoside 5'-triphosphate + ADP. The catalysed reaction is a ribonucleoside 5'-diphosphate + ATP = a ribonucleoside 5'-triphosphate + ADP. Its function is as follows. Major role in the synthesis of nucleoside triphosphates other than ATP. The ATP gamma phosphate is transferred to the NDP beta phosphate via a ping-pong mechanism, using a phosphorylated active-site intermediate. May activate MPK3 and MPK6. May be involved in the regulation of cellular redox state and hydrogen peroxide-mediated MAP kinase signaling. The chain is Nucleoside diphosphate kinase II, chloroplastic (NDPK2) from Arabidopsis thaliana (Mouse-ear cress).